The primary structure comprises 252 residues: Flap endonuclease Xni (252 aa).

A Mg(2+)-binding site is contributed by D105. Residues 162–250 enclose the 5'-3' exonuclease domain; that stretch reads ERTQFIDYLA…LNANLSQFRL (89 aa). L172, A173, P181, V183, and I186 together coordinate K(+). The interaction with DNA stretch occupies residues 185–190; it reads GIGPKS.

Belongs to the Xni family. Mg(2+) is required as a cofactor. It depends on K(+) as a cofactor.

Functionally, has flap endonuclease activity. During DNA replication, flap endonucleases cleave the 5'-overhanging flap structure that is generated by displacement synthesis when DNA polymerase encounters the 5'-end of a downstream Okazaki fragment. This chain is Flap endonuclease Xni, found in Shewanella woodyi (strain ATCC 51908 / MS32).